A 326-amino-acid polypeptide reads, in one-letter code: Vitamin B12 import system permease protein BtuC (326 aa).

Transmembrane regions (helical) follow at residues 19 to 39, 61 to 81, 88 to 108, 112 to 132, 146 to 166, 184 to 204, 240 to 260, 274 to 294, and 302 to 322; these read LSVL…LWIL, LAVL…QALF, PGLL…VLLG, LPNW…TLIL, LLAG…AIYF, GGVD…LLWI, GWMV…GLVI, VLLP…DIVA, and ELPI…WLLL.

This sequence belongs to the binding-protein-dependent transport system permease family. FecCD subfamily. In terms of assembly, the complex is composed of two ATP-binding proteins (BtuD), two transmembrane proteins (BtuC) and a solute-binding protein (BtuF).

The protein resides in the cell inner membrane. Part of the ABC transporter complex BtuCDF involved in vitamin B12 import. Involved in the translocation of the substrate across the membrane. The polypeptide is Vitamin B12 import system permease protein BtuC (Escherichia coli O127:H6 (strain E2348/69 / EPEC)).